The sequence spans 425 residues: D-amino acid dehydrogenase (425 aa).

3–17 (VLVMGAGVIGVTTAY) is an FAD binding site.

The protein belongs to the DadA oxidoreductase family. FAD serves as cofactor.

It catalyses the reaction a D-alpha-amino acid + A + H2O = a 2-oxocarboxylate + AH2 + NH4(+). It functions in the pathway amino-acid degradation; D-alanine degradation; NH(3) and pyruvate from D-alanine: step 1/1. Functionally, oxidative deamination of D-amino acids. This chain is D-amino acid dehydrogenase, found in Rhodopseudomonas palustris (strain HaA2).